Consider the following 96-residue polypeptide: UPF0235 protein YggU (96 aa).

It belongs to the UPF0235 family.

The sequence is that of UPF0235 protein YggU from Escherichia coli O127:H6 (strain E2348/69 / EPEC).